Reading from the N-terminus, the 236-residue chain is MTRRYWNINLEEMMEAGVHFGHGTRKWNPRMAPYISAKRKGIHITNLTRTARFLSEACDLVFDAASSGKHFLIVGTKNKAADSVASAAIRARCHYVNKKWLGGMSTNWSTTETRLQKFRDLRAEQKMGRLNRLPKRDAAMLKRQLSRLQTYLGGIKYMTGLPDIVIIVDQQEEYTALRECVTLGIPTICLIDTNCDPDLADISIPANDDAIASIRLILNKLVSAICEGRSGYIRNR.

The protein belongs to the universal ribosomal protein uS2 family.

It localises to the plastid. The protein localises to the chloroplast. The sequence is that of Small ribosomal subunit protein uS2c (rps2) from Chloranthus spicatus (Chulantree).